The chain runs to 138 residues: Enhancer of split malpha protein (138 aa).

The protein belongs to the M4-like protein family.

Part of the Notch signaling pathway. In Drosophila melanogaster (Fruit fly), this protein is Enhancer of split malpha protein.